Reading from the N-terminus, the 521-residue chain is MSGARTAHALVFLLGCSALALGVCSASLEHGEAEYYVAAVYEHRSVLSPNPLELSSRQQALELMKQNLDVYEQQVMAAAQKGAHIIVFPEDGIHGFNFTRTSIYPFLDLMPSPRLVSWNPCLEPFRFNDTEVLQRLSCMAIKGKMFLVANLGTKQPCLGSDPGCPQDGRYQFNTNVAFSDNGTLVGRYRKHNLYFEEAFDSPADVDLTTFDTPFAGKFGMFTCFDILFFDPAVRLLRDFEVKHIAYPTAWMNQLPLLAAIEIQKAFATAFGVTVLAANIHHPTLGMTGSGIHTPLKSFWYHNMDDPEGHLIIARVATNPQGLVGTENTTSEMDPSHRKFLKVLSGDPYCEKDAQEVRCDEAAKWNLNAPPTFHSEMMYDNFTLVPVWGKEGHLQVCSNSLCCHLLFERPALSKELYALGVFDGLHTVHGTYYVQACALVKCGGAGFETCGQEISEAEGLFDFHLWGNFSTLYVFPLFLTSGMTLDTPDQLGWESDHYFLRKRGLSSGLVTAALYGRLYERN.

An N-terminal signal peptide occupies residues Met1 to Ser25. In terms of domain architecture, CN hydrolase spans Asn50–Thr329. The active-site Proton acceptor is Glu90. N-linked (GlcNAc...) asparagine glycosylation is found at Asn128 and Asn181. Residue Lys190 is the Proton donor of the active site. The Nucleophile role is filled by Cys223. Asn380 is a glycosylation site (N-linked (GlcNAc...) asparagine).

This sequence belongs to the carbon-nitrogen hydrolase superfamily. BTD/VNN family.

It is found in the secreted. Its subcellular location is the extracellular space. The enzyme catalyses biocytin + H2O = biotin + L-lysine. The catalysed reaction is biotin amide + H2O = biotin + NH4(+). In terms of biological role, catalytic release of biotin from biocytin, the product of biotin-dependent carboxylases degradation. The chain is Biotinidase from Rattus norvegicus (Rat).